Reading from the N-terminus, the 245-residue chain is 8-amino-3,8-dideoxy-manno-octulosonate cytidylyltransferase (245 aa).

This sequence belongs to the KdsB family.

Its subcellular location is the cytoplasm. It catalyses the reaction 8-amino-3,8-dideoxy-alpha-D-manno-octulosonate + CTP = CMP-8-amino-3,8-dideoxy-alpha-D-manno-oct-2-ulosonate + diphosphate. The protein operates within bacterial outer membrane biogenesis; lipopolysaccharide biosynthesis. Activates KDO8N (a required 8-carbon sugar) for incorporation into bacterial lipopolysaccharide in the Shewanella genus. The protein is 8-amino-3,8-dideoxy-manno-octulosonate cytidylyltransferase of Shewanella piezotolerans (strain WP3 / JCM 13877).